A 204-amino-acid polypeptide reads, in one-letter code: Thiamine-phosphate synthase (204 aa).

4-amino-2-methyl-5-(diphosphooxymethyl)pyrimidine is bound by residues 35–39 (QVREK) and asparagine 67. Mg(2+)-binding residues include aspartate 68 and aspartate 87. Serine 106 is a 4-amino-2-methyl-5-(diphosphooxymethyl)pyrimidine binding site. Residue 132 to 134 (TPT) participates in 2-[(2R,5Z)-2-carboxy-4-methylthiazol-5(2H)-ylidene]ethyl phosphate binding. 4-amino-2-methyl-5-(diphosphooxymethyl)pyrimidine is bound at residue lysine 135. Residues glycine 163 and 183–184 (VS) contribute to the 2-[(2R,5Z)-2-carboxy-4-methylthiazol-5(2H)-ylidene]ethyl phosphate site.

This sequence belongs to the thiamine-phosphate synthase family. Mg(2+) serves as cofactor.

The catalysed reaction is 2-[(2R,5Z)-2-carboxy-4-methylthiazol-5(2H)-ylidene]ethyl phosphate + 4-amino-2-methyl-5-(diphosphooxymethyl)pyrimidine + 2 H(+) = thiamine phosphate + CO2 + diphosphate. It catalyses the reaction 2-(2-carboxy-4-methylthiazol-5-yl)ethyl phosphate + 4-amino-2-methyl-5-(diphosphooxymethyl)pyrimidine + 2 H(+) = thiamine phosphate + CO2 + diphosphate. It carries out the reaction 4-methyl-5-(2-phosphooxyethyl)-thiazole + 4-amino-2-methyl-5-(diphosphooxymethyl)pyrimidine + H(+) = thiamine phosphate + diphosphate. It participates in cofactor biosynthesis; thiamine diphosphate biosynthesis; thiamine phosphate from 4-amino-2-methyl-5-diphosphomethylpyrimidine and 4-methyl-5-(2-phosphoethyl)-thiazole: step 1/1. In terms of biological role, condenses 4-methyl-5-(beta-hydroxyethyl)thiazole monophosphate (THZ-P) and 2-methyl-4-amino-5-hydroxymethyl pyrimidine pyrophosphate (HMP-PP) to form thiamine monophosphate (TMP). This Vibrio campbellii (strain ATCC BAA-1116) protein is Thiamine-phosphate synthase.